The sequence spans 197 residues: UPF0301 protein A2cp1_4106 (197 aa).

Belongs to the UPF0301 (AlgH) family.

This is UPF0301 protein A2cp1_4106 from Anaeromyxobacter dehalogenans (strain 2CP-1 / ATCC BAA-258).